Consider the following 479-residue polypeptide: Ribosomal RNA small subunit methyltransferase F (479 aa).

S-adenosyl-L-methionine is bound by residues 125–131, E149, D176, and D194; that span reads AAAPGSK. The active-site Nucleophile is C247.

This sequence belongs to the class I-like SAM-binding methyltransferase superfamily. RsmB/NOP family.

It is found in the cytoplasm. The catalysed reaction is cytidine(1407) in 16S rRNA + S-adenosyl-L-methionine = 5-methylcytidine(1407) in 16S rRNA + S-adenosyl-L-homocysteine + H(+). Functionally, specifically methylates the cytosine at position 1407 (m5C1407) of 16S rRNA. The chain is Ribosomal RNA small subunit methyltransferase F from Escherichia coli O81 (strain ED1a).